A 125-amino-acid chain; its full sequence is Small ribosomal subunit protein uS12c (125 aa).

Residues 1–23 are disordered; that stretch reads MPTLEHLTRSPRKKIKRKTKSPA. Basic residues predominate over residues 9 to 20; the sequence is RSPRKKIKRKTK.

The protein belongs to the universal ribosomal protein uS12 family. In terms of assembly, part of the 30S ribosomal subunit.

The protein resides in the plastid. It localises to the chloroplast. With S4 and S5 plays an important role in translational accuracy. Located at the interface of the 30S and 50S subunits. This is Small ribosomal subunit protein uS12c (rps12) from Euglena gracilis.